Here is a 172-residue protein sequence, read N- to C-terminus: Large ribosomal subunit protein uL10 (172 aa).

The protein belongs to the universal ribosomal protein uL10 family. Part of the ribosomal stalk of the 50S ribosomal subunit. The N-terminus interacts with L11 and the large rRNA to form the base of the stalk. The C-terminus forms an elongated spine to which L12 dimers bind in a sequential fashion forming a multimeric L10(L12)X complex.

Functionally, forms part of the ribosomal stalk, playing a central role in the interaction of the ribosome with GTP-bound translation factors. The polypeptide is Large ribosomal subunit protein uL10 (Brucella anthropi (strain ATCC 49188 / DSM 6882 / CCUG 24695 / JCM 21032 / LMG 3331 / NBRC 15819 / NCTC 12168 / Alc 37) (Ochrobactrum anthropi)).